Here is a 171-residue protein sequence, read N- to C-terminus: Co-chaperone protein HscB (171 aa).

The 73-residue stretch at 2–74 (DYFTLFGLPA…LMRAEYLLSL (73 aa)) folds into the J domain.

Belongs to the HscB family. Interacts with HscA and stimulates its ATPase activity. Interacts with IscU.

Functionally, co-chaperone involved in the maturation of iron-sulfur cluster-containing proteins. Seems to help targeting proteins to be folded toward HscA. This Escherichia coli (strain SE11) protein is Co-chaperone protein HscB.